The primary structure comprises 359 residues: Phospho-N-acetylmuramoyl-pentapeptide-transferase (359 aa).

10 helical membrane passes run 3–23 (QILI…PALI), 55–75 (VAII…GLAF), 80–100 (ISAS…VGFL), 117–137 (TAKT…ALGF), 156–176 (IATV…VVSA), 187–207 (LDGL…LITF), 231–251 (LAIV…WNAA), 255–275 (IFMG…ISVT), 280–300 (ILAV…VLQI), and 334–354 (FWLL…GEWL).

It belongs to the glycosyltransferase 4 family. MraY subfamily. Mg(2+) is required as a cofactor.

It is found in the cell membrane. The catalysed reaction is UDP-N-acetyl-alpha-D-muramoyl-L-alanyl-gamma-D-glutamyl-meso-2,6-diaminopimeloyl-D-alanyl-D-alanine + di-trans,octa-cis-undecaprenyl phosphate = di-trans,octa-cis-undecaprenyl diphospho-N-acetyl-alpha-D-muramoyl-L-alanyl-D-glutamyl-meso-2,6-diaminopimeloyl-D-alanyl-D-alanine + UMP. Its pathway is cell wall biogenesis; peptidoglycan biosynthesis. Its function is as follows. Catalyzes the initial step of the lipid cycle reactions in the biosynthesis of the cell wall peptidoglycan: transfers peptidoglycan precursor phospho-MurNAc-pentapeptide from UDP-MurNAc-pentapeptide onto the lipid carrier undecaprenyl phosphate, yielding undecaprenyl-pyrophosphoryl-MurNAc-pentapeptide, known as lipid I. This is Phospho-N-acetylmuramoyl-pentapeptide-transferase from Mycobacterium avium (strain 104).